The following is a 502-amino-acid chain: UPF0371 protein CLH_2534 (502 aa).

This sequence belongs to the UPF0371 family.

This is UPF0371 protein CLH_2534 from Clostridium botulinum (strain Alaska E43 / Type E3).